The following is a 646-amino-acid chain: A-kinase anchor protein 8-like (646 aa).

Positions 1–268 (MSYTGFVQGS…MRRTWKTWTT (268 aa)) are sufficient for activation of CTE-mediated expression. Arg208 carries the post-translational modification Asymmetric dimethylarginine; alternate. Position 208 is an omega-N-methylarginine; alternate (Arg208). Omega-N-methylarginine is present on residues Arg217, Arg237, and Arg247. The residue at position 257 (Lys257) is an N6-acetyllysine. Residues 264–381 (KTWTTADFRT…QDKQKKRQRD (118 aa)) form a disordered region. Thr267 carries the post-translational modification Phosphothreonine. A Nuclear localization signal motif is present at residues 274–279 (KKKKRK). Residues 280 to 296 (QGGSPDEPDSKATRTDC) carry the Nuclear export signal (NES) motif. Ser283 carries the phosphoserine modification. Positions 287–296 (PDSKATRTDC) are enriched in basic and acidic residues. Thr292 is subject to Phosphothreonine. Ser297 carries the post-translational modification Phosphoserine. Over residues 298-314 (DNSDSDNDEGTEGEATE) the composition is skewed to acidic residues. Over residues 337 to 349 (EDGREEGKEDPEK) the composition is skewed to basic and acidic residues. A Nuclear localization signal motif is present at residues 362-364 (KRK). 2 consecutive C2H2 AKAP95-type zinc fingers follow at residues 391 to 413 (CSLC…SKFH) and 484 to 507 (CAAC…TMDH). The disordered stretch occupies residues 545-646 (GENPFTDSPE…DDEEGGGGAP (102 aa)). Phosphoserine is present on Ser552. The span at 552 to 563 (SPEEEKEQEEAE) shows a compositional bias: acidic residues. Low complexity predominate over residues 564–586 (GGALDEGAQGEAAGISEGAEGVP). Over residues 587–607 (AQPPVPPEPAPGAVSPPPPPP) the composition is skewed to pro residues. Positions 634-646 (DVEDDEEGGGGAP) are enriched in acidic residues.

The protein belongs to the AKAP95 family. In terms of assembly, interacts (via N-terminus) with DHX9 (via RGG region). Interacts with TMPO isoform Beta, PRPF40A, RNF43, lamin-B. Interacts with HDAC3; increased during mitosis. Interacts with EBV EBNA-LP. Interacts with HIV-1 reverse transcriptase/ribonuclease H. Phosphorylated on serine or threonine residues possibly by PKA; probably modulating the interaction with TMPO isoform Beta. In terms of tissue distribution, ubiquitously expressed. Expressed in the brain cortex (at protein level).

It localises to the nucleus. Its subcellular location is the nucleus matrix. It is found in the nucleus speckle. The protein localises to the PML body. The protein resides in the cytoplasm. Its function is as follows. Could play a role in constitutive transport element (CTE)-mediated gene expression by association with DHX9. Increases CTE-dependent nuclear unspliced mRNA export. Proposed to target PRKACA to the nucleus but does not seem to be implicated in the binding of regulatory subunit II of PKA. May be involved in nuclear envelope breakdown and chromatin condensation. May be involved in anchoring nuclear membranes to chromatin in interphase and in releasing membranes from chromating at mitosis. May regulate the initiation phase of DNA replication when associated with TMPO isoform Beta. Required for cell cycle G2/M transition and histone deacetylation during mitosis. In mitotic cells recruits HDAC3 to the vicinity of chromatin leading to deacetylation and subsequent phosphorylation at 'Ser-10' of histone H3; in this function seems to act redundantly with AKAP8. May be involved in regulation of pre-mRNA splicing. Functionally, (Microbial infection) In case of EBV infection, may target PRKACA to EBNA-LP-containing nuclear sites to modulate transcription from specific promoters. (Microbial infection) Can synergize with DHX9 to activate the CTE-mediated gene expression of type D retroviruses. In terms of biological role, (Microbial infection) In case of HIV-1 infection, involved in the DHX9-promoted annealing of host tRNA(Lys3) to viral genomic RNA as a primer in reverse transcription; in vitro negatively regulates DHX9 annealing activity. The polypeptide is A-kinase anchor protein 8-like (AKAP8L) (Homo sapiens (Human)).